The following is a 552-amino-acid chain: MAGIQQQQLVNDTLPASWDGSSKRTAAVNVEGHPRPCIDHELKDPSHQKSGWRKFLSYVGPGFLVSLAYLDPGNLETDLQAGANHRYELLWVVLVGLIFALTIQSLAANLGVSTGKHLSELCRAEYPRHVKYCLWLLAEIAVMAADIPEVIGTAFALNILFNIPVWFGVLCTGCSTLLLLGLQKYGVRKLELLIAVLVFVMAACFFGEMRYVKPPATDVLKGMFIPKLSGQGSTGDAIALLGALVMPHNLFLHSALVLSRKTPNSVRGINDACRYFLIESGLALFVAFLINLAVISVSGTVCSAQNLSSENADRCGDLTLNSASFLLQNVLGKSSSKIYAIAVLASGQSSTITGTYAGQYIMEGFLELRMRKWIRNLVTRCIAITPSLIVSIIGGSSGAGRLIIIASMILSFELPFALIPLLKFSSSTTKMGPHKNSIYIIVLSWILGLGIIGINIYYLSTGFVGWLIDNNLPKVANVFIGIIVFPLMAIYILAVIYLTFRKDTVVTFMEPNKNDPQQQTNMENGLAKSTEGPEMVDRAPYREDLADIPLPE.

Asparagine 11 carries an N-linked (GlcNAc...) asparagine glycan. A run of 7 helical transmembrane segments spans residues 55-75 (FLSY…PGNL), 88-108 (ELLW…SLAA), 133-155 (CLWL…GTAF), 159-181 (ILFN…LLLG), 189-209 (KLEL…FGEM), 238-258 (IALL…ALVL), and 275-295 (YFLI…LAVI). A glycan (N-linked (GlcNAc...) asparagine) is linked at asparagine 306. Transmembrane regions (helical) follow at residues 338–358 (IYAI…TYAG), 377–397 (LVTR…GGSS), 402–422 (LIII…IPLL), 438–458 (IYII…NIYY), and 478–498 (VFIG…VIYL). The interval 511–552 (PNKNDPQQQTNMENGLAKSTEGPEMVDRAPYREDLADIPLPE) is disordered. A compositionally biased stretch (polar residues) spans 514–523 (NDPQQQTNME). The span at 535–545 (MVDRAPYREDL) shows a compositional bias: basic and acidic residues.

It belongs to the NRAMP (TC 2.A.55) family.

The protein resides in the membrane. Its function is as follows. Probable divalent metal transporter. This Populus trichocarpa (Western balsam poplar) protein is Metal transporter Nramp6.1.